Reading from the N-terminus, the 400-residue chain is Diphosphomevalonate decarboxylase (400 aa).

An N-acetylalanine modification is found at Ala2. (R)-5-diphosphomevalonate is bound by residues 23–26 (YWGK), Arg78, 156–161 (SGSACR), and Thr212.

It belongs to the diphosphomevalonate decarboxylase family. Homodimer.

The protein localises to the cytoplasm. It catalyses the reaction (R)-5-diphosphomevalonate + ATP = isopentenyl diphosphate + ADP + phosphate + CO2. Its pathway is steroid biosynthesis; cholesterol biosynthesis. Catalyzes the ATP dependent decarboxylation of (R)-5-diphosphomevalonate to form isopentenyl diphosphate (IPP). Functions in the mevalonate (MVA) pathway leading to isopentenyl diphosphate (IPP), a key precursor for the biosynthesis of isoprenoids and sterol synthesis. This chain is Diphosphomevalonate decarboxylase (MVD), found in Bos taurus (Bovine).